The following is a 343-amino-acid chain: Anthranilate phosphoribosyltransferase (343 aa).

5-phospho-alpha-D-ribose 1-diphosphate contacts are provided by residues Gly84, 87–88, Thr92, 94–97, 112–120, and Ser124; these read GD, NIST, and KHGNRSVSS. Gly84 contacts anthranilate. Mg(2+) is bound at residue Ser96. Anthranilate is bound at residue Asn115. Arg170 contributes to the anthranilate binding site. Mg(2+) is bound by residues Asp229 and Glu230.

Belongs to the anthranilate phosphoribosyltransferase family. As to quaternary structure, homodimer. Mg(2+) is required as a cofactor.

It catalyses the reaction N-(5-phospho-beta-D-ribosyl)anthranilate + diphosphate = 5-phospho-alpha-D-ribose 1-diphosphate + anthranilate. It participates in amino-acid biosynthesis; L-tryptophan biosynthesis; L-tryptophan from chorismate: step 2/5. Functionally, catalyzes the transfer of the phosphoribosyl group of 5-phosphorylribose-1-pyrophosphate (PRPP) to anthranilate to yield N-(5'-phosphoribosyl)-anthranilate (PRA). The chain is Anthranilate phosphoribosyltransferase from Stenotrophomonas maltophilia (strain R551-3).